Consider the following 530-residue polypeptide: 5-aminolevulinate synthase, mitochondrial (530 aa).

Residues 1-26 constitute a mitochondrion transit peptide; that stretch reads MFRPVLKVRPSFSYPYSIVSSRSVRL. 3 residues coordinate substrate: R73, S186, and K205. Residues S238, H266, and T316 each coordinate pyridoxal 5'-phosphate. K319 is an active-site residue. N6-(pyridoxal phosphate)lysine is present on K319. Positions 348 and 349 each coordinate pyridoxal 5'-phosphate. Position 434 (T434) interacts with substrate.

It belongs to the class-II pyridoxal-phosphate-dependent aminotransferase family. As to quaternary structure, homodimer. It depends on pyridoxal 5'-phosphate as a cofactor.

The protein resides in the mitochondrion matrix. The enzyme catalyses succinyl-CoA + glycine + H(+) = 5-aminolevulinate + CO2 + CoA. The protein operates within porphyrin-containing compound metabolism; protoporphyrin-IX biosynthesis; 5-aminolevulinate from glycine: step 1/1. Catalyzes the synthesis of 5-aminolevulinate (ALA) from succinyl-CoA and glycine, the first and rate-limiting step in heme biosynthesis. The sequence is that of 5-aminolevulinate synthase, mitochondrial (HEM1) from Candida glabrata (strain ATCC 2001 / BCRC 20586 / JCM 3761 / NBRC 0622 / NRRL Y-65 / CBS 138) (Yeast).